A 444-amino-acid chain; its full sequence is ATP-dependent protease ATPase subunit HslU (444 aa).

ATP-binding positions include Ile18 and 60 to 65 (GVGKTE). The tract at residues 143 to 163 (WGEVENHDSHSSTRQAFRKKL) is disordered. ATP contacts are provided by Asp257, Glu322, and Arg394.

This sequence belongs to the ClpX chaperone family. HslU subfamily. A double ring-shaped homohexamer of HslV is capped on each side by a ring-shaped HslU homohexamer. The assembly of the HslU/HslV complex is dependent on binding of ATP.

The protein localises to the cytoplasm. In terms of biological role, ATPase subunit of a proteasome-like degradation complex; this subunit has chaperone activity. The binding of ATP and its subsequent hydrolysis by HslU are essential for unfolding of protein substrates subsequently hydrolyzed by HslV. HslU recognizes the N-terminal part of its protein substrates and unfolds these before they are guided to HslV for hydrolysis. In Haemophilus influenzae (strain 86-028NP), this protein is ATP-dependent protease ATPase subunit HslU.